Reading from the N-terminus, the 344-residue chain is GTPase Obg (344 aa).

In terms of domain architecture, Obg spans 1–159 (MKFLDEAKVY…MWLILRLKLI (159 aa)). The region spanning 160–327 (ADAGLVGLPN…ALRAIQAQLD (168 aa)) is the OBG-type G domain. GTP is bound by residues 166 to 173 (GLPNAGKS), 191 to 195 (FTTLH), 212 to 215 (DIPG), 279 to 282 (SKAD), and 308 to 310 (SAA). The Mg(2+) site is built by Ser173 and Thr193.

This sequence belongs to the TRAFAC class OBG-HflX-like GTPase superfamily. OBG GTPase family. Monomer. Requires Mg(2+) as cofactor.

The protein resides in the cytoplasm. An essential GTPase which binds GTP, GDP and possibly (p)ppGpp with moderate affinity, with high nucleotide exchange rates and a fairly low GTP hydrolysis rate. Plays a role in control of the cell cycle, stress response, ribosome biogenesis and in those bacteria that undergo differentiation, in morphogenesis control. This Methylorubrum extorquens (strain CM4 / NCIMB 13688) (Methylobacterium extorquens) protein is GTPase Obg.